The primary structure comprises 379 residues: Putative glutamate--cysteine ligase 2 (379 aa).

The protein belongs to the glutamate--cysteine ligase type 2 family. YbdK subfamily.

It catalyses the reaction L-cysteine + L-glutamate + ATP = gamma-L-glutamyl-L-cysteine + ADP + phosphate + H(+). Functionally, ATP-dependent carboxylate-amine ligase which exhibits weak glutamate--cysteine ligase activity. This is Putative glutamate--cysteine ligase 2 from Mycobacterium avium (strain 104).